The primary structure comprises 80 residues: Lantibiotic Flvalpha.b (80 aa).

Positions 1–38 (MNKNPIYRSEEEAKNIACGNVAAELDENSQALDAINGA) are cleaved as a propeptide — cleaved by FlvT. 2,3-didehydrobutyrine; by FlvM1 occurs at positions 43 and 47. A cross-link (beta-methyllanthionine (Thr-Cys); by FlvM1) is located at residues 52 to 55 (TVGC). Residues 58-68 (SYGLGNGGYCC) constitute a cross-link (lanthionine (Ser-Cys); by FlvM1). 2 cross-links (beta-methyllanthionine (Thr-Cys); by FlvM1) span residues 69 to 74 (TYTVEC) and 71 to 78 (TVECSKTC).

Post-translationally, the lanthionine formed by Ser-58 and Cys-68 forms a putative lipid II binding motif. Maturation of FlvA1 peptides involves the enzymatic conversion of Thr, and Ser into dehydrated AA and the formation of thioether bonds with cysteines. Modifications are processed by the flavecin synthetase FlvM1. This is followed by membrane translocation and cleavage of the modified precursor. In terms of processing, contains DL-lanthionine and DL-beta-methyllanthionine, when coepressed in E.coli with the flavecin synthetase FlvM1.

It localises to the secreted. Its function is as follows. Lanthionine-containing peptide antibiotic (lantibiotic) only active on Gram-positive bacteria in synergy with Flvbeta peptides, which are encoded by the same operon than Flvalpha.a. Shows antibacterial activity in synergy with Flvbeta.b, Flvbeta.c, Flvbeta.e and Flvbeta.g. Does not show antibacterial activity when tested with Flvbeta.a, Flvbeta.d, Flvbeta.f and Flvbeta.h. The bactericidal activity of lantibiotics is based on depolarization of energized bacterial cytoplasmic membranes, initiated by the formation of aqueous transmembrane pores. The chain is Lantibiotic Flvalpha.b from Ruminococcus flavefaciens.